The sequence spans 460 residues: Ecdysteroid UDP-glucosyltransferase (460 aa).

Residues 1-18 (MFISILLLALAVERILCA) form the signal peptide.

It belongs to the UDP-glycosyltransferase family.

In terms of biological role, catalyzes the transfer of glucose from UDP-glucose to ecdysteroids which are insect molting hormones. Expression of egt interferes with normal insect development and block molting. This is Ecdysteroid UDP-glucosyltransferase (EGT) from Lacanobia oleracea granulosis virus (LoGV).